The primary structure comprises 373 residues: Acyl-CoA dehydrogenase FadE27 (373 aa).

FAD contacts are provided by Arg251, His327, and Gly331.

Belongs to the acyl-CoA dehydrogenase family. Heterotetramer (dimer of heterodimers) composed of FadE26 and FadE27. Requires FAD as cofactor.

The enzyme catalyses (25S)-3-oxocholest-4-en-26-oyl-CoA + A = 3-oxo-cholest-4,24-dien-26-oyl-CoA + AH2. Its pathway is steroid metabolism; cholesterol degradation. Its activity is regulated as follows. Uncompetitively inhibited by high concentration of 3-OCS-CoA. Involved in the first cycle of side chain dehydrogenation in the beta-oxidation of cholesterol catabolism. It contributes partly to the virulence by increasing the efficiency of beta-oxidation. Catalyzes the dehydrogenation of acyl-CoA ester side chains of (25S)-3-oxo-cholest-4-en-26-oyl-CoA (3-OCS-CoA) to yield (24E)-3-oxo-cholest-4,24-dien-26-oyl-CoA. Also able to dehydrogenate steroyl-CoA such as 3-oxo-chol-4-en-24-oyl-CoA (3-OCO-CoA) as well as 3-oxo-4-pregnene-20-carboxyl-CoA (3-OPC-CoA). It dehydrogenates only (25S)-OCS-CoA diastereomer. The chain is Acyl-CoA dehydrogenase FadE27 (fadE27) from Mycobacterium tuberculosis (strain ATCC 25618 / H37Rv).